The sequence spans 144 residues: Large ribosomal subunit protein uL16 (144 aa).

The protein belongs to the universal ribosomal protein uL16 family. As to quaternary structure, part of the 50S ribosomal subunit.

Functionally, binds 23S rRNA and is also seen to make contacts with the A and possibly P site tRNAs. This Thermoanaerobacter pseudethanolicus (strain ATCC 33223 / 39E) (Clostridium thermohydrosulfuricum) protein is Large ribosomal subunit protein uL16.